We begin with the raw amino-acid sequence, 371 residues long: Cysteine proteinase 1 (371 aa).

Residues 1-18 form the signal peptide; it reads MAHRVLLLLSLASAAAVA. A propeptide spans 19-136 (activation peptide); the sequence is AAVDAEDPLI…HEAPVLPTDG (118 aa). 2 cysteine pairs are disulfide-bonded: Cys158–Cys208 and Cys192–Cys241. The active site involves Cys161. Asn254 is a glycosylation site (N-linked (GlcNAc...) asparagine). A disulfide bridge connects residues Cys297 and Cys354. Catalysis depends on residues His303 and Asn330.

The protein belongs to the peptidase C1 family. In terms of tissue distribution, expressed during the late stages of seed ripening, in mature seeds and during germination.

Involved in the degradation of the storage protein zein. May play a role in proteolysis during emergencies. This Zea mays (Maize) protein is Cysteine proteinase 1 (CCP1).